The sequence spans 683 residues: Patellin-2 (683 aa).

The tract at residues 1–23 (MAQEEIQKPTASVPVVKEETPAP) is disordered. A2 is modified (N-acetylalanine). S79 carries the phosphoserine modification. A coiled-coil region spans residues 86-163 (LASELQEAEK…ETKEEEKSAA (78 aa)). Residues 111–279 (KREFTAPPPP…KKEEKATAST (169 aa)) are disordered. Residues 124–161 (VKEEKVEEKKTEETEEKKEEVKTEEKSLEAETKEEEKS) are compositionally biased toward basic and acidic residues. Residues 232 to 243 (PVETTPAAPVTT) are compositionally biased toward low complexity. The span at 244–275 (ETKEEEKAAPVTTETKEEEKAAPGETKKEEKA) shows a compositional bias: basic and acidic residues. A Glycyl lysine isopeptide (Lys-Gly) (interchain with G-Cter in ubiquitin) cross-link involves residue K394. The CRAL-TRIO domain occupies 404–576 (EDLEGSEFEK…KYGGLSKDSP (173 aa)). The region spanning 580-681 (EDGVTEAVVK…KKKVLYRSKT (102 aa)) is the GOLD domain.

This sequence belongs to the patellin family. In terms of assembly, interacts with the deubiquitinating enzyme AMSH3.

It is found in the membrane. The protein localises to the cytoplasm. In terms of biological role, carrier protein that may be involved in membrane-trafficking events associated with cell plate formation during cytokinesis. Binds to some hydrophobic molecules such as phosphoinositides and promotes their transfer between the different cellular sites. The sequence is that of Patellin-2 (PATL2) from Arabidopsis thaliana (Mouse-ear cress).